A 380-amino-acid polypeptide reads, in one-letter code: MMKKYSLTTHSTETCQILFTSVSNVFKYIPSGTRRILIMYQDSVSQVLPIFSAASGVQCYRYLIPDSESAKQLGVAEQCWRFLAQNNFTRSDLIVSCGGGAASDLSGFVASSYLRGIKIIHIPTTLIGMVDAAIGGKTGINLKEGKNLVGSFYSPYIVLCDPSMLTTLNEEHLKSGLAEIIKCGFIQDESILSILEHNAQDHMDCSQRVCAETLPPKLLEELIHKAVSVKITMVDSDFRDTHKRQFLNYGHTLAHALEAATSHKLSHGQAVSIGMVYAAQVAFAKGLIGRNILTRHERILETYGLPVCPPEVQWRNITPYMQRDKKNMQNNDTDSYKDSREIPQISTQSKLVLLRDIANPFITSVSHTVLLEAYEAMFPQ.

Residues Gly-100 to Asp-104, Thr-124 to Thr-125, Lys-137, and Lys-146 each bind NAD(+). 3 residues coordinate Zn(2+): Glu-179, His-251, and His-267.

Belongs to the sugar phosphate cyclases superfamily. Dehydroquinate synthase family. NAD(+) serves as cofactor. It depends on Co(2+) as a cofactor. Requires Zn(2+) as cofactor.

The protein resides in the cytoplasm. It carries out the reaction 7-phospho-2-dehydro-3-deoxy-D-arabino-heptonate = 3-dehydroquinate + phosphate. The protein operates within metabolic intermediate biosynthesis; chorismate biosynthesis; chorismate from D-erythrose 4-phosphate and phosphoenolpyruvate: step 2/7. Functionally, catalyzes the conversion of 3-deoxy-D-arabino-heptulosonate 7-phosphate (DAHP) to dehydroquinate (DHQ). This Tropheryma whipplei (strain TW08/27) (Whipple's bacillus) protein is 3-dehydroquinate synthase.